Consider the following 570-residue polypeptide: Peptidyl-prolyl cis-trans isomerase FKBP9 (570 aa).

The first 24 residues, 1–24, serve as a signal peptide directing secretion; it reads MALGARGWRRRSLLLLLLWVTGQA. PPIase FKBP-type domains lie at 54-142, 166-254, 278-365, and 389-477; these read GDFV…VDIW, SDFV…LDLH, GDFL…IDFH, and GDYL…LELV. 4 N-linked (GlcNAc...) asparagine glycosylation sites follow: Asn174, Asn286, Asn302, and Asn397. EF-hand domains lie at 488–523 and 533–568; these read WNGE…QVAT and NAEM…AKHD. 10 residues coordinate Ca(2+): Asp501, Asp503, Asn505, Glu507, Glu512, Asp546, Asn548, Asp550, Lys552, and Glu557. The Prevents secretion from ER signature appears at 567-570; it reads HDEL.

Post-translationally, phosphorylated. As to expression, predominantly expressed in heart, skeletal muscle, lung, liver and kidney. Lower levels found in brain, spleen and testis.

The protein resides in the endoplasmic reticulum lumen. The enzyme catalyses [protein]-peptidylproline (omega=180) = [protein]-peptidylproline (omega=0). Inhibited by FK506. Functionally, PPIases accelerate the folding of proteins during protein synthesis. The sequence is that of Peptidyl-prolyl cis-trans isomerase FKBP9 (Fkbp9) from Mus musculus (Mouse).